Here is a 483-residue protein sequence, read N- to C-terminus: Altronate oxidoreductase (483 aa).

18-29 (IIQFGEGNFLRA) lines the NAD(+) pocket.

It belongs to the mannitol dehydrogenase family. UxaB subfamily.

It carries out the reaction D-altronate + NAD(+) = keto-D-tagaturonate + NADH + H(+). Its pathway is carbohydrate metabolism; pentose and glucuronate interconversion. The sequence is that of Altronate oxidoreductase from Shigella flexneri serotype 5b (strain 8401).